Consider the following 474-residue polypeptide: MEDSLTTITTAAIIGAGLAGCECALRLARAGVRVTLFEMKPAAFSPAHSNPDLGELVCSNSLRSDDIASGVGLLKQEMRELGSIVMEAADATRVPAGKALAVDRDLFARHITAVIEAEPGITLERREVASLDDPALASADVVVIAAGPLASAGLSDSLAAVVGGQLYFYDAIAPIIAAESIDLSIVFSGSRYGEPGEEGDYLNCPMNRDEYDAFYEALLAAEKVPSRDFEKELHFEGCMPIEALAERGPRTLVFGPFKPVGFTDPRTGTRPYAIIQLRAENRNKTAFNIVGCQTKLKYAEQERVFRMIPGLAGAEFVRHGSVHRNTYVNAPRVLADDLSLRADKRVFLAGQITGVEGYVESAACGMWLGMVLAARIQGRELPTPPPQTALGALLMHLRTPVKNFQPSNANFGLMPELGLKVKKRERKPLYSARAREHFVRWLAEAGVTPVIEPLLPTAPDTTGAAGEETTQAES.

Residue 15-20 (GAGLAG) coordinates FAD. The tract at residues 453 to 474 (PLLPTAPDTTGAAGEETTQAES) is disordered.

Belongs to the MnmG family. TrmFO subfamily. The cofactor is FAD.

Its subcellular location is the cytoplasm. It carries out the reaction uridine(54) in tRNA + (6R)-5,10-methylene-5,6,7,8-tetrahydrofolate + NADH + H(+) = 5-methyluridine(54) in tRNA + (6S)-5,6,7,8-tetrahydrofolate + NAD(+). It catalyses the reaction uridine(54) in tRNA + (6R)-5,10-methylene-5,6,7,8-tetrahydrofolate + NADPH + H(+) = 5-methyluridine(54) in tRNA + (6S)-5,6,7,8-tetrahydrofolate + NADP(+). Catalyzes the folate-dependent formation of 5-methyl-uridine at position 54 (M-5-U54) in all tRNAs. The chain is Methylenetetrahydrofolate--tRNA-(uracil-5-)-methyltransferase TrmFO from Nitratidesulfovibrio vulgaris (strain ATCC 29579 / DSM 644 / CCUG 34227 / NCIMB 8303 / VKM B-1760 / Hildenborough) (Desulfovibrio vulgaris).